Reading from the N-terminus, the 285-residue chain is Transcription factor E2F6 (285 aa).

Lysine 9 is covalently cross-linked (Glycyl lysine isopeptide (Lys-Gly) (interchain with G-Cter in SUMO2)). A DNA-binding region spans residues 50–129; it reads YVSMRKALKV…SKNHIRWIGS (80 aa). A DEF box motif is present at residues 95 to 129; sequence KLGVRKRRVYDITNVLDGIDLVEKKSKNHIRWIGS. Residues 130-222 form a dimerization region; sequence DLSNFGAVPQ…PAPKEDSITV (93 aa). A leucine-zipper region spans residues 143–164; that stretch reads LQEELSDLSAMEDALDELIKDC. The tract at residues 173–285 is transcription repression; it reads DDKENERLAY…QSEEVLEVSN (113 aa). Residues 240–285 are disordered; it reads QGSHSSNKTSDNVGTSSSKSKPLEHPQPEKEENPPQQSEEVLEVSN. Over residues 241 to 259 the composition is skewed to polar residues; it reads GSHSSNKTSDNVGTSSSKS. The segment covering 260–272 has biased composition (basic and acidic residues); it reads KPLEHPQPEKEEN.

It belongs to the E2F/DP family. In terms of assembly, forms heterodimers with DP family members TFDP1 or TFDP2. Component of the DRTF1/E2F transcription factor complex. Part of the E2F6.com-1 complex in G0 phase composed of E2F6, MGA, MAX, TFDP1, CBX3, BAT8, EUHMTASE1, RING1, RNF2, MBLR, L3MBTL2 and YAF2. Component of some MLL1/MLL complex, at least composed of the core components KMT2A/MLL1, ASH2L, HCFC1/HCF1, WDR5 and RBBP5, as well as the facultative components BACC1, CHD8, E2F6, HSP70, INO80C, KANSL1, LAS1L, MAX, MCRS1, MGA, KAT8/MOF, PELP1, PHF20, PRP31, RING2, RUVB1/TIP49A, RUVB2/TIP49B, SENP3, TAF1, TAF4, TAF6, TAF7, TAF9 and TEX10.

Its subcellular location is the nucleus. Inhibitor of E2F-dependent transcription. Binds DNA cooperatively with DP proteins through the E2 recognition site, 5'-TTTC[CG]CGC-3'. Has a preference for the 5'-TTTCCCGC-3' E2F recognition site. E2F6 lacks the transcriptional activation and pocket protein binding domains. Appears to regulate a subset of E2F-dependent genes whose products are required for entry into the cell cycle but not for normal cell cycle progression. Represses expression of some meiosis-specific genes, including SLC25A31/ANT4. May silence expression via the recruitment of a chromatin remodeling complex containing histone H3-K9 methyltransferase activity. Overexpression delays the exit of cells from the S-phase. This is Transcription factor E2F6 from Bos taurus (Bovine).